A 587-amino-acid polypeptide reads, in one-letter code: Pectinesterase 2 (587 aa).

Residues 1–40 form the signal peptide; sequence MAPIKEFISKFSDFKNNKKLILSSAAIALLLLASIVGIAA. Asn-99 and Asn-218 each carry an N-linked (GlcNAc...) asparagine glycan. Substrate-binding residues include Thr-351 and Gln-381. Residue Asp-404 is the Proton donor of the active site. Cys-418 and Cys-438 are oxidised to a cystine. Asp-425 (nucleophile) is an active-site residue. Residues Arg-493 and Trp-495 each coordinate substrate.

In the N-terminal section; belongs to the PMEI family. It in the C-terminal section; belongs to the pectinesterase family. As to expression, expressed in flower buds.

The protein localises to the secreted. It localises to the cell wall. It catalyses the reaction [(1-&gt;4)-alpha-D-galacturonosyl methyl ester](n) + n H2O = [(1-&gt;4)-alpha-D-galacturonosyl](n) + n methanol + n H(+). The protein operates within glycan metabolism; pectin degradation; 2-dehydro-3-deoxy-D-gluconate from pectin: step 1/5. In terms of biological role, acts in the modification of cell walls via demethylesterification of cell wall pectin. The chain is Pectinesterase 2 (PME2) from Arabidopsis thaliana (Mouse-ear cress).